The following is a 342-amino-acid chain: Dihydroorotase (342 aa).

Positions 13 and 15 each coordinate Zn(2+). Residues 15-17 and N41 contribute to the substrate site; that span reads HLR. K98, H135, and H173 together coordinate Zn(2+). The residue at position 98 (K98) is an N6-carboxylysine. H135 provides a ligand contact to substrate. A substrate-binding site is contributed by L218. A Zn(2+)-binding site is contributed by D246. Residue D246 is part of the active site. Positions 250 and 262 each coordinate substrate.

The protein belongs to the metallo-dependent hydrolases superfamily. DHOase family. Class II DHOase subfamily. As to quaternary structure, homodimer. It depends on Zn(2+) as a cofactor.

It catalyses the reaction (S)-dihydroorotate + H2O = N-carbamoyl-L-aspartate + H(+). Its pathway is pyrimidine metabolism; UMP biosynthesis via de novo pathway; (S)-dihydroorotate from bicarbonate: step 3/3. In terms of biological role, catalyzes the reversible cyclization of carbamoyl aspartate to dihydroorotate. In Vibrio campbellii (strain ATCC BAA-1116), this protein is Dihydroorotase.